The chain runs to 1096 residues: Inactive phospholipase C-like protein 1 (1096 aa).

The segment at 1–101 (MAEGAASREA…KKTVSFSSMP (101 aa)) is disordered. Ser-48 carries the phosphoserine modification. Low complexity predominate over residues 49-60 (GVALPGAAGVPA). Residue Ser-78 is modified to Phosphoserine. Residues 83–222 (PSNQKCGGRK…NIWVSGLRYL (140 aa)) are interaction with PPP1C. Phosphothreonine is present on Thr-94. At Thr-94 the chain carries Phosphothreonine; by PKA. Residue Ser-96 is modified to Phosphoserine; by PKA. The region spanning 114-224 (SFMQAGCELK…WVSGLRYLVS (111 aa)) is the PH domain. A PI-PLC X-box domain is found at 399–543 (QDMTQPLSHY…LKNMIIVKGK (145 aa)). The tract at residues 544 to 568 (KLPSESDLLEGEVTDEDEEAEMSRR) is interaction with GABA A beta subunit. Residues 550–563 (DLLEGEVTDEDEEA) are compositionally biased toward acidic residues. The segment at 550-569 (DLLEGEVTDEDEEAEMSRRM) is disordered. Thr-557 is modified (phosphothreonine). Ser-570 is modified (phosphoserine). In terms of domain architecture, PI-PLC Y-box spans 586–702 (LSDLVSICKS…GYVLRPSIMR (117 aa)). One can recognise a C2 domain in the interval 702–831 (RDEVSYFSAN…PGYRHVPLRS (130 aa)). The stretch at 1040 to 1060 (DLLKNAKNEAVENIKQIQLAC) forms a coiled coil. Residues 1067–1096 (KGPGGGSEAKGKRSLEAIEEKESSEENGKL) are disordered. The segment covering 1075–1096 (AKGKRSLEAIEEKESSEENGKL) has biased composition (basic and acidic residues). Ser-1080 bears the Phosphoserine mark.

Interacts with PPP2CA, Ins(1,4,5)P3, Ins(1,4,5,6)P4 GABARAP, GABA receptor beta subunits, GABA receptor gamma-2 subunits and PPP1C. May form a ternary complex with GABA receptor beta subunit and GABARAP. The formation of a ternary complex with GABA receptor beta subunit and GABARAP could be the key step for facilitating the association of GABARAP with the GABA receptor gamma-2 subunit and to allow it to be transported at the right destination. Phosphorylated by the catalytic subunit of PKA. Phosphorylation of Thr-94 resulted in dissociation of PPP1C from PRIP1.

The protein localises to the cytoplasm. Functionally, involved in an inositol phospholipid-based intracellular signaling cascade. Shows no PLC activity to phosphatidylinositol 4,5-bisphosphate and phosphatidylinositol. Component in the phospho-dependent endocytosis process of GABA A receptor. Acts as an inhibitor of PPP1C. Involved in the assembly and/or the trafficking of gamma-2 subunit-containing GABA A receptors. In Mus musculus (Mouse), this protein is Inactive phospholipase C-like protein 1 (Plcl1).